A 204-amino-acid chain; its full sequence is Somatotropin (204 aa).

Positions 1 to 17 (MDRVVLLLSVLSLGVSS) are cleaved as a signal peptide. Glutamine 18 carries the post-translational modification Pyrrolidone carboxylic acid. 2 cysteine pairs are disulfide-bonded: cysteine 69-cysteine 177 and cysteine 194-cysteine 202.

It belongs to the somatotropin/prolactin family.

The protein resides in the secreted. Functionally, growth hormone plays an important role in growth control and is involved in the regulation of several anabolic processes. Implicated as an osmoregulatory substance important for seawater adaptation. The protein is Somatotropin (gh) of Seriola quinqueradiata (Five-ray yellowtail).